The primary structure comprises 389 residues: MQQNIWFTPEGIEDLLPEEAKKLEFYRRQLLDGFELSGYDLVLPPIAEFTDSLLTGKGRHLAVDTCRFTDQESGKMMGVRADMTPQVARIATNRIKQTGIQRLCYVGEVLKTRNNKAKGSRSPIEIGAELFGHSGVESDIEVIELMVSSLHNIGLQDLTLSLGHVSVVDELMNVSGLTPTQKENLVDILLRKAVPEYTDFVAELTVTEAQKQAFELLLSLCGDIATVTEAMQGLAGLSEPMQRHLAHLQSVVDHFAGFDGLKIHMDLADLRGYQYHTGMIFSCYAAGRKMYQLARGGRYDGIGSEFGSAQLATGFSLDLRGALDLLTSPAEAEKEIVYAPNVYDADLQAEIAKLKQQKTIIKRFYEFDALEKGSRYLALQASQWILSVK.

The protein belongs to the class-II aminoacyl-tRNA synthetase family. HisZ subfamily. As to quaternary structure, heteromultimer composed of HisG and HisZ subunits.

It is found in the cytoplasm. It functions in the pathway amino-acid biosynthesis; L-histidine biosynthesis; L-histidine from 5-phospho-alpha-D-ribose 1-diphosphate: step 1/9. Required for the first step of histidine biosynthesis. May allow the feedback regulation of ATP phosphoribosyltransferase activity by histidine. This chain is ATP phosphoribosyltransferase regulatory subunit, found in Hydrogenovibrio crunogenus (strain DSM 25203 / XCL-2) (Thiomicrospira crunogena).